We begin with the raw amino-acid sequence, 476 residues long: Aspartyl/glutamyl-tRNA(Asn/Gln) amidotransferase subunit B (476 aa).

Belongs to the GatB/GatE family. GatB subfamily. In terms of assembly, heterotrimer of A, B and C subunits.

It catalyses the reaction L-glutamyl-tRNA(Gln) + L-glutamine + ATP + H2O = L-glutaminyl-tRNA(Gln) + L-glutamate + ADP + phosphate + H(+). It carries out the reaction L-aspartyl-tRNA(Asn) + L-glutamine + ATP + H2O = L-asparaginyl-tRNA(Asn) + L-glutamate + ADP + phosphate + 2 H(+). Its function is as follows. Allows the formation of correctly charged Asn-tRNA(Asn) or Gln-tRNA(Gln) through the transamidation of misacylated Asp-tRNA(Asn) or Glu-tRNA(Gln) in organisms which lack either or both of asparaginyl-tRNA or glutaminyl-tRNA synthetases. The reaction takes place in the presence of glutamine and ATP through an activated phospho-Asp-tRNA(Asn) or phospho-Glu-tRNA(Gln). This Shouchella clausii (strain KSM-K16) (Alkalihalobacillus clausii) protein is Aspartyl/glutamyl-tRNA(Asn/Gln) amidotransferase subunit B.